Consider the following 254-residue polypeptide: Anamorsin homolog (254 aa).

Residues 4–132 (VQENNHVLYI…EIGSAAKLSL (129 aa)) are N-terminal SAM-like domain. Residues 132–167 (LGGNKAKVAAVWKLDVDDDDDERIDEDELLDEEDKV) form a linker region. C177, C186, C189, and C191 together coordinate [2Fe-2S] cluster. Residues 177–191 (CGTTGKRKACKDCSC) are fe-S binding site A. 4 residues coordinate [4Fe-4S] cluster: C215, C218, C226, and C229. 2 consecutive short sequence motifs (cx2C motif) follow at residues 215–218 (CGSC) and 226–229 (CATC). Residues 215 to 229 (CGSCYLGDAFRCATC) form a fe-S binding site B region.

This sequence belongs to the anamorsin family. Monomer. [2Fe-2S] cluster is required as a cofactor. Requires [4Fe-4S] cluster as cofactor.

The protein resides in the cytoplasm. The protein localises to the mitochondrion intermembrane space. Functionally, component of the cytosolic iron-sulfur (Fe-S) protein assembly (CIA) machinery. Required for the maturation of extramitochondrial Fe-S proteins. Part of an electron transfer chain functioning in an early step of cytosolic Fe-S biogenesis, facilitating the de novo assembly of a [4Fe-4S] cluster on the cytosolic Fe-S scaffold complex. Electrons are transferred from NADPH via a FAD- and FMN-containing diflavin oxidoreductase. Together with the diflavin oxidoreductase, also required for the assembly of the diferric tyrosyl radical cofactor of ribonucleotide reductase (RNR), probably by providing electrons for reduction during radical cofactor maturation in the catalytic small subunit. The protein is Anamorsin homolog of Aedes aegypti (Yellowfever mosquito).